Here is a 517-residue protein sequence, read N- to C-terminus: Tyrosine 3-monooxygenase (517 aa).

S33 bears the Phosphoserine; by PKA mark. Fe cation is bound by residues H345, H350, and E390.

Belongs to the biopterin-dependent aromatic amino acid hydroxylase family. Fe(2+) is required as a cofactor.

The protein localises to the cytoplasm. It is found in the perinuclear region. It localises to the cell projection. The protein resides in the axon. It catalyses the reaction (6R)-L-erythro-5,6,7,8-tetrahydrobiopterin + L-tyrosine + O2 = (4aS,6R)-4a-hydroxy-L-erythro-5,6,7,8-tetrahydrobiopterin + L-dopa. The protein operates within catecholamine biosynthesis; dopamine biosynthesis; dopamine from L-tyrosine: step 1/2. Phosphorylation leads to an increase in the catalytic activity. In terms of biological role, involved in the synthesis of catecholamines, such as dopamine. Has a role in serotonin signaling. Required for normal explorative and foraging behavior. The polypeptide is Tyrosine 3-monooxygenase (cat-2) (Caenorhabditis briggsae).